The following is a 241-amino-acid chain: Probable transcriptional regulatory protein Rmet_0785 (241 aa).

Belongs to the TACO1 family.

It is found in the cytoplasm. The sequence is that of Probable transcriptional regulatory protein Rmet_0785 from Cupriavidus metallidurans (strain ATCC 43123 / DSM 2839 / NBRC 102507 / CH34) (Ralstonia metallidurans).